The chain runs to 1645 residues: Thrombospondin type-1 domain-containing protein 7A (1645 aa).

Positions 1–38 (MGLRAGRLASPSRGVLQLLRLPLLLLLLLSSGARGAAA) are cleaved as a signal peptide. Residues 39–1595 (QGDTEVPTLY…FGPDGRLKTW (1557 aa)) lie on the Extracellular side of the membrane. TSP type-1 domains lie at 46–105 (TLYL…KVCD), 109–181 (ELYD…IPCQ), and 183–236 (DCIV…NPCE). N-linked (GlcNAc...) asparagine glycosylation occurs at Asn-223. The disordered stretch occupies residues 255 to 300 (PHTRQARQARRRGKNKEREKERGKAVKDPEARELIKKKRNRNRQNR). A coiled-coil region spans residues 256 to 304 (HTRQARQARRRGKNKEREKERGKAVKDPEARELIKKKRNRNRQNRQENR). Residues 258 to 269 (RQARQARRRGKN) show a composition bias toward basic residues. A compositionally biased stretch (basic and acidic residues) spans 270 to 288 (KEREKERGKAVKDPEAREL). Over residues 289–298 (IKKKRNRNRQ) the composition is skewed to basic residues. N-linked (GlcNAc...) asparagine glycosylation is present at Asn-321. TSP type-1 domains lie at 349–405 (ECQV…VSQG), 412–499 (ATYG…VPCP), 501–563 (ECEV…PSCY), 623–684 (DCVL…HPCT), 685–758 (VYHW…LPCR), 760–820 (DCVV…PTCH), 821–893 (SYRW…IPCQ), 895–948 (DCQF…CPCD), 949–1022 (KYNA…IPCP), 1024–1084 (DCKL…SDCN), 1085–1152 (QYIW…LPCP), 1154–1208 (DCVI…KNCY), 1209–1272 (HYDY…VECP), 1274–1329 (NCQL…KPCY), 1330–1400 (RWQY…QPCP), and 1402–1463 (DCYL…GQCY). 3 disulfides stabilise this stretch: Cys-424–Cys-494, Cys-444–Cys-498, and Cys-455–Cys-483. Residue Asn-439 is glycosylated (N-linked (GlcNAc...) asparagine). N-linked (GlcNAc...) asparagine glycosylation occurs at Asn-489. 2 cysteine pairs are disulfide-bonded: Cys-624-Cys-666 and Cys-635-Cys-639. The N-linked (GlcNAc...) asparagine glycan is linked to Asn-668. Cystine bridges form between Cys-678–Cys-683, Cys-696–Cys-753, Cys-717–Cys-757, Cys-728–Cys-741, Cys-761–Cys-803, Cys-772–Cys-776, and Cys-813–Cys-819. The N-linked (GlcNAc...) asparagine glycan is linked to Asn-706. Residue Asn-957 is glycosylated (N-linked (GlcNAc...) asparagine). Disulfide bonds link Cys-961/Cys-1017, Cys-983/Cys-1021, Cys-994/Cys-1007, Cys-1025/Cys-1062, Cys-1036/Cys-1040, and Cys-1079/Cys-1083. Residue Asn-1032 is glycosylated (N-linked (GlcNAc...) asparagine). A disulfide bond links Cys-1201 and Cys-1207. N-linked (GlcNAc...) asparagine glycosylation occurs at Asn-1213. 12 disulfide bridges follow: Cys-1220–Cys-1267, Cys-1228–Cys-1271, Cys-1239–Cys-1252, Cys-1275–Cys-1313, Cys-1286–Cys-1290, Cys-1323–Cys-1328, Cys-1339–Cys-1395, Cys-1346–Cys-1399, Cys-1357–Cys-1376, Cys-1403–Cys-1447, Cys-1414–Cys-1418, and Cys-1457–Cys-1462. Asn-1264 carries an N-linked (GlcNAc...) asparagine glycan. Residue Asn-1354 is glycosylated (N-linked (GlcNAc...) asparagine). 2 N-linked (GlcNAc...) asparagine glycosylation sites follow: Asn-1488 and Asn-1535. Residues 1596 to 1616 (VYGVAAGAFVLLVFIVSMIYL) traverse the membrane as a helical segment. Residues 1617-1645 (ACKKPKKPQRRQNNRLKPLTLAYDGDADM) lie on the Cytoplasmic side of the membrane.

Proteolytic cleavage in the extracellular region generates a 210 kDa soluble form. In terms of processing, extensively N-glycosylated. In terms of tissue distribution, detected on kidney podocytes along the glomerular capillary wall (at protein level).

Its subcellular location is the cell membrane. The protein localises to the cell projection. The protein resides in the secreted. In terms of biological role, plays a role in actin cytoskeleton rearrangement. Functionally, the soluble form promotes endothelial cell migration and filopodia formation during sprouting angiogenesis via a FAK-dependent mechanism. This is Thrombospondin type-1 domain-containing protein 7A (Thsd7a) from Mus musculus (Mouse).